We begin with the raw amino-acid sequence, 160 residues long: Small ribosomal subunit protein uS7 (160 aa).

The protein belongs to the universal ribosomal protein uS7 family. In terms of assembly, part of the 30S ribosomal subunit. Contacts proteins S9 and S11.

One of the primary rRNA binding proteins, it binds directly to 16S rRNA where it nucleates assembly of the head domain of the 30S subunit. Is located at the subunit interface close to the decoding center, probably blocks exit of the E-site tRNA. This Hydrogenobaculum sp. (strain Y04AAS1) protein is Small ribosomal subunit protein uS7.